The primary structure comprises 339 residues: DNA-directed RNA polymerase subunit alpha (339 aa).

The alpha N-terminal domain (alpha-NTD) stretch occupies residues 1–233 (MVREEVAGST…DLFLPFLHAE (233 aa)). The tract at residues 264-339 (KKGIPLNCIF…IDLLKNKLSF (76 aa)) is alpha C-terminal domain (alpha-CTD).

Belongs to the RNA polymerase alpha chain family. In plastids the minimal PEP RNA polymerase catalytic core is composed of four subunits: alpha, beta, beta', and beta''. When a (nuclear-encoded) sigma factor is associated with the core the holoenzyme is formed, which can initiate transcription.

It is found in the plastid. It localises to the chloroplast. The enzyme catalyses RNA(n) + a ribonucleoside 5'-triphosphate = RNA(n+1) + diphosphate. In terms of biological role, DNA-dependent RNA polymerase catalyzes the transcription of DNA into RNA using the four ribonucleoside triphosphates as substrates. The chain is DNA-directed RNA polymerase subunit alpha from Aegilops uniaristata (Goatgrass).